Consider the following 467-residue polypeptide: UTP--glucose-1-phosphate uridylyltransferase (467 aa).

Residues 83–86, lysine 97, glutamine 160, and glycine 189 contribute to the UTP site; that span reads LNGG. 85-86 lines the substrate pocket; sequence GG. Residues histidine 190 and 218 to 220 contribute to the substrate site; that span reads NSD. UTP contacts are provided by aspartate 220 and lysine 358.

The protein belongs to the UDPGP type 1 family.

The protein resides in the cytoplasm. The catalysed reaction is alpha-D-glucose 1-phosphate + UTP + H(+) = UDP-alpha-D-glucose + diphosphate. Functionally, plays a central role as a glucosyl donor in cellular metabolic pathways. The polypeptide is UTP--glucose-1-phosphate uridylyltransferase (UGPA) (Musa acuminata (Banana)).